The following is a 939-amino-acid chain: Translation initiation factor IF-2 (939 aa).

Residues 81 to 94 (EEQSRKAYEKEQQL) show a composition bias toward basic and acidic residues. 2 disordered regions span residues 81–303 (EEQS…KKVE) and 316–337 (TISG…KMRR). Residues 99 to 108 (SSAPSPAPAA) show a composition bias toward low complexity. Composition is skewed to basic and acidic residues over residues 112–127 (EPVK…RHEP) and 148–173 (SPKE…EKAA). Positions 178 to 189 (EAQPEAQSQQEP) are enriched in low complexity. Basic and acidic residues predominate over residues 244-255 (FKENAAELKDEF). Residues 276–287 (AAGEGESTTGGE) show a composition bias toward low complexity. A compositionally biased stretch (basic residues) spans 292-301 (KKKKGKKKKK). Over residues 318–328 (SGMDDSGSSGS) the composition is skewed to low complexity. In terms of domain architecture, tr-type G spans 436 to 606 (TRPPVVTIMG…LTEAEVRELK (171 aa)). Residues 445–452 (GHVDHGKT) form a G1 region. GTP is bound at residue 445–452 (GHVDHGKT). The segment at 470-474 (GITQH) is G2. A G3 region spans residues 492-495 (DTPG). GTP contacts are provided by residues 492–496 (DTPGH) and 546–549 (NKID). Positions 546-549 (NKID) are G4. Positions 582-584 (SAK) are G5.

Belongs to the TRAFAC class translation factor GTPase superfamily. Classic translation factor GTPase family. IF-2 subfamily.

It localises to the cytoplasm. One of the essential components for the initiation of protein synthesis. Protects formylmethionyl-tRNA from spontaneous hydrolysis and promotes its binding to the 30S ribosomal subunits. Also involved in the hydrolysis of GTP during the formation of the 70S ribosomal complex. The sequence is that of Translation initiation factor IF-2 from Chlorobaculum parvum (strain DSM 263 / NCIMB 8327) (Chlorobium vibrioforme subsp. thiosulfatophilum).